Reading from the N-terminus, the 430-residue chain is Enolase (430 aa).

Position 167 (glutamine 167) interacts with (2R)-2-phosphoglycerate. Glutamate 209 functions as the Proton donor in the catalytic mechanism. Mg(2+) is bound by residues aspartate 246, glutamate 287, and aspartate 314. (2R)-2-phosphoglycerate contacts are provided by lysine 339, arginine 368, serine 369, and lysine 390. Lysine 339 acts as the Proton acceptor in catalysis.

The protein belongs to the enolase family. Mg(2+) serves as cofactor.

It is found in the cytoplasm. It localises to the secreted. The protein localises to the cell surface. It catalyses the reaction (2R)-2-phosphoglycerate = phosphoenolpyruvate + H2O. The protein operates within carbohydrate degradation; glycolysis; pyruvate from D-glyceraldehyde 3-phosphate: step 4/5. Functionally, catalyzes the reversible conversion of 2-phosphoglycerate (2-PG) into phosphoenolpyruvate (PEP). It is essential for the degradation of carbohydrates via glycolysis. The polypeptide is Enolase (Prochlorococcus marinus (strain MIT 9312)).